A 152-amino-acid polypeptide reads, in one-letter code: D-aminoacyl-tRNA deacylase (152 aa).

The Gly-cisPro motif, important for rejection of L-amino acids motif lies at 142–143; sequence GP.

The protein belongs to the DTD family. Homodimer.

It is found in the cytoplasm. It catalyses the reaction glycyl-tRNA(Ala) + H2O = tRNA(Ala) + glycine + H(+). It carries out the reaction a D-aminoacyl-tRNA + H2O = a tRNA + a D-alpha-amino acid + H(+). In terms of biological role, an aminoacyl-tRNA editing enzyme that deacylates mischarged D-aminoacyl-tRNAs. Also deacylates mischarged glycyl-tRNA(Ala), protecting cells against glycine mischarging by AlaRS. Acts via tRNA-based rather than protein-based catalysis; rejects L-amino acids rather than detecting D-amino acids in the active site. By recycling D-aminoacyl-tRNA to D-amino acids and free tRNA molecules, this enzyme counteracts the toxicity associated with the formation of D-aminoacyl-tRNA entities in vivo and helps enforce protein L-homochirality. The chain is D-aminoacyl-tRNA deacylase from Burkholderia cenocepacia (strain HI2424).